Here is a 95-residue protein sequence, read N- to C-terminus: Small ribosomal subunit protein uS19 (95 aa).

This sequence belongs to the universal ribosomal protein uS19 family.

In terms of biological role, protein S19 forms a complex with S13 that binds strongly to the 16S ribosomal RNA. The chain is Small ribosomal subunit protein uS19 from Thermotoga sp. (strain RQ2).